A 216-amino-acid polypeptide reads, in one-letter code: Calcium-binding protein 2 (216 aa).

The disordered stretch occupies residues 1–41 (MGNCAKTPWHRGSKERWQWPGSPLGGSRPSPGPRTEEQEGT). Glycine 2 is lipidated: N-myristoyl glycine. A compositionally biased stretch (low complexity) spans 20–29 (PGSPLGGSRP). EF-hand domains are found at residues 74-109 (EEIE…LGYM), 125-142 (GKVD…KLLA), 148-183 (IGVR…LLGE), and 185-216 (LSQR…MMSR). Residues aspartate 87, aspartate 89, aspartate 91, tyrosine 93, and glutamate 98 each coordinate Ca(2+). Residues aspartate 161, asparagine 163, aspartate 165, cysteine 167, glutamate 172, aspartate 198, asparagine 200, aspartate 202, and glutamate 209 each coordinate Ca(2+).

In terms of tissue distribution, expressed in the inner hair cells (IHCs), outer hair cells,(OHCs) and vestibular hair cells within the ear and in the retina (at protein level). Expressed in the retinal cone type 6 ON-bipolar cells and type 1 OFF-bipolar cells (at protein level). Expressed in the organ of Corti and spiral ganglion neurons in the cochlea (at protein level).

Its subcellular location is the cytoplasm. It is found in the perinuclear region. It localises to the cell membrane. The protein resides in the golgi apparatus. Required for sound encoding at inner hair cells (IHCs) synapses, likely via inhibition of the inactivation of voltage-gated calcium channel of type 1.3 (Cav1.3) in the IHCs. Required for the normal transfer of light signals through the retina. This chain is Calcium-binding protein 2 (Cabp2), found in Mus musculus (Mouse).